We begin with the raw amino-acid sequence, 425 residues long: MAFLALGINHKTASVDVRERVAFTPEQLVEALQQLCQLTQSREAAILSTCNRSELYIEHEHLGADSILAWLANYHHLSLEELRASAYVHEDDAAVRHMMRVASGLDSLVLGEPQILGQMKSAYAVAREAGTVGPLLGRLFQATFSAAKQVRTDTAIGENPVSVAFAAVSLAKQIFSDLQRSQALLIGAGETITLVARHLHDLGVKRIVVANRTLERASMLAAEFGAHAVLLSDIPAELVNSDIVISSTASQLPILGKGAVESALKLRKHKPIFMVDIAVPRDIEPEVGELDDVYLYSVDDLHEVVAENLKSRQGAALAAEQLVSVGAEDFMSRLRELAAVDVLRAYRQQSERLRDEELSKAQRMLANGSNAEDVLIQLARGLTNKLLHAPSVQLKKLSAEGRVDALAMAQELFALGEGSTDKPPQ.

Residues 49–52 (TCNR), S107, 112–114 (EPQ), and Q118 each bind substrate. C50 serves as the catalytic Nucleophile. 187-192 (GAGETI) lines the NADP(+) pocket.

It belongs to the glutamyl-tRNA reductase family. Homodimer.

It catalyses the reaction (S)-4-amino-5-oxopentanoate + tRNA(Glu) + NADP(+) = L-glutamyl-tRNA(Glu) + NADPH + H(+). Its pathway is porphyrin-containing compound metabolism; protoporphyrin-IX biosynthesis; 5-aminolevulinate from L-glutamyl-tRNA(Glu): step 1/2. In terms of biological role, catalyzes the NADPH-dependent reduction of glutamyl-tRNA(Glu) to glutamate 1-semialdehyde (GSA). The chain is Glutamyl-tRNA reductase from Pseudomonas syringae pv. syringae (strain B728a).